A 527-amino-acid chain; its full sequence is Bifunctional purine biosynthesis protein PurH (527 aa).

The MGS-like domain maps to Ala-8–Val-156.

It belongs to the PurH family.

The catalysed reaction is (6R)-10-formyltetrahydrofolate + 5-amino-1-(5-phospho-beta-D-ribosyl)imidazole-4-carboxamide = 5-formamido-1-(5-phospho-D-ribosyl)imidazole-4-carboxamide + (6S)-5,6,7,8-tetrahydrofolate. It carries out the reaction IMP + H2O = 5-formamido-1-(5-phospho-D-ribosyl)imidazole-4-carboxamide. It functions in the pathway purine metabolism; IMP biosynthesis via de novo pathway; 5-formamido-1-(5-phospho-D-ribosyl)imidazole-4-carboxamide from 5-amino-1-(5-phospho-D-ribosyl)imidazole-4-carboxamide (10-formyl THF route): step 1/1. Its pathway is purine metabolism; IMP biosynthesis via de novo pathway; IMP from 5-formamido-1-(5-phospho-D-ribosyl)imidazole-4-carboxamide: step 1/1. The sequence is that of Bifunctional purine biosynthesis protein PurH from Mycobacterium sp. (strain KMS).